Here is a 356-residue protein sequence, read N- to C-terminus: Putative KilA-N domain-containing protein R878 (356 aa).

Residues 1–12 (MKVRKSNNKPLK) are compositionally biased toward basic residues. The tract at residues 1–114 (MKVRKSNNKP…DDDGSDNNVY (114 aa)) is disordered. A compositionally biased stretch (low complexity) spans 14–46 (SASFTSGTKTGSKSAKSVNSGSKSMKSTKSSSK). Residues 66 to 114 (SDNDELSDNEISDNESSDDDEISDNESSDDDEISDNEISDDDGSDNNVY) show a composition bias toward acidic residues. Residues 130–239 (NYSKGKFGNF…VRIGFCMEEW (110 aa)) enclose the KilA-N domain.

The chain is Putative KilA-N domain-containing protein R878 from Acanthamoeba polyphaga (Amoeba).